Reading from the N-terminus, the 806-residue chain is Phenylalanine--tRNA ligase beta subunit (806 aa).

In terms of domain architecture, tRNA-binding spans 40–153 (FNSPDYLQLA…ADAIIIDHVS (114 aa)). The region spanning 413-487 (PFSKKLTVNF…KLIDINKLKP (75 aa)) is the B5 domain. Aspartate 465, aspartate 471, glutamate 474, and glutamate 475 together coordinate Mg(2+).

Belongs to the phenylalanyl-tRNA synthetase beta subunit family. Type 1 subfamily. In terms of assembly, tetramer of two alpha and two beta subunits. Requires Mg(2+) as cofactor.

Its subcellular location is the cytoplasm. It carries out the reaction tRNA(Phe) + L-phenylalanine + ATP = L-phenylalanyl-tRNA(Phe) + AMP + diphosphate + H(+). In Mycoplasma genitalium (strain ATCC 33530 / DSM 19775 / NCTC 10195 / G37) (Mycoplasmoides genitalium), this protein is Phenylalanine--tRNA ligase beta subunit (pheT).